Consider the following 166-residue polypeptide: Ribosome maturation factor RimM (166 aa).

In terms of domain architecture, PRC barrel spans 90–163 (EGEFLVSQII…TVTIELLEGL (74 aa)).

Belongs to the RimM family. Binds ribosomal protein uS19.

Its subcellular location is the cytoplasm. In terms of biological role, an accessory protein needed during the final step in the assembly of 30S ribosomal subunit, possibly for assembly of the head region. Essential for efficient processing of 16S rRNA. May be needed both before and after RbfA during the maturation of 16S rRNA. It has affinity for free ribosomal 30S subunits but not for 70S ribosomes. This Oenococcus oeni (strain ATCC BAA-331 / PSU-1) protein is Ribosome maturation factor RimM.